Here is a 477-residue protein sequence, read N- to C-terminus: Aspartyl/glutamyl-tRNA(Asn/Gln) amidotransferase subunit B (477 aa).

The protein belongs to the GatB/GatE family. GatB subfamily. As to quaternary structure, heterotrimer of A, B and C subunits.

It catalyses the reaction L-glutamyl-tRNA(Gln) + L-glutamine + ATP + H2O = L-glutaminyl-tRNA(Gln) + L-glutamate + ADP + phosphate + H(+). The enzyme catalyses L-aspartyl-tRNA(Asn) + L-glutamine + ATP + H2O = L-asparaginyl-tRNA(Asn) + L-glutamate + ADP + phosphate + 2 H(+). Allows the formation of correctly charged Asn-tRNA(Asn) or Gln-tRNA(Gln) through the transamidation of misacylated Asp-tRNA(Asn) or Glu-tRNA(Gln) in organisms which lack either or both of asparaginyl-tRNA or glutaminyl-tRNA synthetases. The reaction takes place in the presence of glutamine and ATP through an activated phospho-Asp-tRNA(Asn) or phospho-Glu-tRNA(Gln). The polypeptide is Aspartyl/glutamyl-tRNA(Asn/Gln) amidotransferase subunit B (Nitrosococcus oceani (strain ATCC 19707 / BCRC 17464 / JCM 30415 / NCIMB 11848 / C-107)).